The sequence spans 178 residues: Phosphopantetheine adenylyltransferase (178 aa).

S8 contacts substrate. ATP-binding positions include 8-9 and H16; that span reads SF. Substrate is bound by residues K40, T72, and R86. Residues 87 to 89, E97, and 122 to 128 contribute to the ATP site; these read GLR and YSFLSSS.

Belongs to the bacterial CoaD family. As to quaternary structure, homohexamer. It depends on Mg(2+) as a cofactor.

The protein localises to the cytoplasm. It carries out the reaction (R)-4'-phosphopantetheine + ATP + H(+) = 3'-dephospho-CoA + diphosphate. Its pathway is cofactor biosynthesis; coenzyme A biosynthesis; CoA from (R)-pantothenate: step 4/5. In terms of biological role, reversibly transfers an adenylyl group from ATP to 4'-phosphopantetheine, yielding dephospho-CoA (dPCoA) and pyrophosphate. In Picosynechococcus sp. (strain ATCC 27264 / PCC 7002 / PR-6) (Agmenellum quadruplicatum), this protein is Phosphopantetheine adenylyltransferase.